A 119-amino-acid polypeptide reads, in one-letter code: Beta-2-microglobulin (119 aa).

Residues 1–20 (MARFVVVPLLVLLSLFGLEA) form the signal peptide. An Ig-like C1-type domain is found at 25–114 (PKIQVYSRYP…VTFSTPKTVK (90 aa)). Cys-45 and Cys-100 are disulfide-bonded.

The protein belongs to the beta-2-microglobulin family. As to quaternary structure, heterodimer of an alpha chain and a beta chain. Beta-2-microglobulin is the beta-chain of major histocompatibility complex class I molecules.

The protein localises to the secreted. Its function is as follows. Component of the class I major histocompatibility complex (MHC). Involved in the presentation of peptide antigens to the immune system. The polypeptide is Beta-2-microglobulin (B2M) (Saguinus bicolor bicolor (Pied bare-faced tamarin)).